We begin with the raw amino-acid sequence, 246 residues long: 3-deoxy-manno-octulosonate cytidylyltransferase (246 aa).

This sequence belongs to the KdsB family.

Its subcellular location is the cytoplasm. It catalyses the reaction 3-deoxy-alpha-D-manno-oct-2-ulosonate + CTP = CMP-3-deoxy-beta-D-manno-octulosonate + diphosphate. The protein operates within nucleotide-sugar biosynthesis; CMP-3-deoxy-D-manno-octulosonate biosynthesis; CMP-3-deoxy-D-manno-octulosonate from 3-deoxy-D-manno-octulosonate and CTP: step 1/1. It participates in bacterial outer membrane biogenesis; lipopolysaccharide biosynthesis. Activates KDO (a required 8-carbon sugar) for incorporation into bacterial lipopolysaccharide in Gram-negative bacteria. This is 3-deoxy-manno-octulosonate cytidylyltransferase from Bradyrhizobium sp. (strain BTAi1 / ATCC BAA-1182).